The chain runs to 525 residues: NAD(P)H-quinone oxidoreductase chain 4-2 (525 aa).

The next 14 helical transmembrane spans lie at 6–26 (FPWL…IPII), 36–56 (WYAL…FYTS), 91–111 (LIIL…PVTL), 115–135 (LFYF…AVQD), 137–157 (LLFF…LAIW), 169–189 (FILY…TMAF), 212–232 (LLLY…IPLH), 243–263 (TAPA…YALI), 277–297 (FAPV…LTSF), 314–334 (MGFV…GAVL), 335–355 (QMVS…ATYD), 375–397 (IFAM…GFVA), 417–437 (VIVV…LLSM), and 464–484 (VFVI…PKLL).

The protein belongs to the complex I subunit 4 family.

The protein resides in the cellular thylakoid membrane. It carries out the reaction a plastoquinone + NADH + (n+1) H(+)(in) = a plastoquinol + NAD(+) + n H(+)(out). It catalyses the reaction a plastoquinone + NADPH + (n+1) H(+)(in) = a plastoquinol + NADP(+) + n H(+)(out). In terms of biological role, NDH-1 shuttles electrons from NAD(P)H, via FMN and iron-sulfur (Fe-S) centers, to quinones in the respiratory chain. The immediate electron acceptor for the enzyme in this species is believed to be plastoquinone. Couples the redox reaction to proton translocation (for every two electrons transferred, four hydrogen ions are translocated across the cytoplasmic membrane), and thus conserves the redox energy in a proton gradient. The protein is NAD(P)H-quinone oxidoreductase chain 4-2 (ndhD2) of Nostoc sp. (strain PCC 7120 / SAG 25.82 / UTEX 2576).